The primary structure comprises 505 residues: Glucan endo-1,3-beta-glucosidase 4 (505 aa).

An N-terminal signal peptide occupies residues Met1–Ala23. N-linked (GlcNAc...) asparagine glycosylation is found at Asn70 and Asn110. Glu119 serves as the catalytic Proton donor. Residues Asn178 and Asn256 are each glycosylated (N-linked (GlcNAc...) asparagine). Residue Glu266 is the Nucleophile of the active site. Asn298, Asn338, and Asn357 each carry an N-linked (GlcNAc...) asparagine glycan. Cys363 and Cys426 form a disulfide bridge. Asn453 is a glycosylation site (N-linked (GlcNAc...) asparagine). The GPI-anchor amidated alanine moiety is linked to residue Ala474. Residues Asn475 to Leu505 constitute a propeptide, removed in mature form.

This sequence belongs to the glycosyl hydrolase 17 family. In terms of processing, contains two additional disulfide bonds.

It is found in the cell membrane. The catalysed reaction is Hydrolysis of (1-&gt;3)-beta-D-glucosidic linkages in (1-&gt;3)-beta-D-glucans.. In Arabidopsis thaliana (Mouse-ear cress), this protein is Glucan endo-1,3-beta-glucosidase 4.